The chain runs to 693 residues: Homeobox protein caupolican (693 aa).

6 disordered regions span residues 20–104, 288–331, 387–453, 480–538, 561–627, and 648–693; these read TANT…PSRG, NKMT…PGNQ, AQSH…DCGI, YLGQ…PLSM, MHLP…SMHS, and YGHG…RSGS. Over residues 41 to 59 the composition is skewed to low complexity; it reads ASLSPSGGSTATGLTAGPL. The segment at residues 226–288 is a DNA-binding region (homeobox; TALE-type); the sequence is LAARRKNATR…NARRRLKKEN (63 aa). Composition is skewed to basic and acidic residues over residues 288–298 and 308–317; these read NKMTWEPKNKT and DDEKEKDAGD. 2 stretches are compositionally biased toward low complexity: residues 397-419 and 493-515; these read HPQQMQHHQQQQQQQQNQQQLQH and QQLPHQPLQQHQQQQLQQLQQQQ. Residues 516-527 show a composition bias toward basic residues; sequence QHHHHPHHHHPH. Low complexity predominate over residues 609–627; it reads SSGGSSSSSGSSHSSSMHS. The segment covering 651–675 has biased composition (basic residues); the sequence is GHSHGHGHGHGHGLGHGHGLGHGHG.

It belongs to the TALE/IRO homeobox family.

Its subcellular location is the nucleus. Functionally, controls proneural and vein forming genes. Positive transcriptional controller of ac-sc (achaete-scute). May act as an activator that interacts with the transcriptional complex assembled on the ac and sc promoters and participates in transcription initiation. The chain is Homeobox protein caupolican (caup) from Drosophila melanogaster (Fruit fly).